The following is a 350-amino-acid chain: Small ribosomal subunit biogenesis GTPase RsgA (350 aa).

Residues 1–17 (MSKNKLSKGQQRRVNAN) show a composition bias toward polar residues. A disordered region spans residues 1–33 (MSKNKLSKGQQRRVNANHQRRLKTSKEKPDYDD). The CP-type G domain occupies 104–273 (TSVLTRPDFY…VIDSPGVREF (170 aa)). Residues 160 to 163 (NKID) and 214 to 222 (GQSGVGKSS) each bind GTP. The Zn(2+) site is built by cysteine 297, cysteine 302, histidine 304, and cysteine 310.

It belongs to the TRAFAC class YlqF/YawG GTPase family. RsgA subfamily. As to quaternary structure, monomer. Associates with 30S ribosomal subunit, binds 16S rRNA. It depends on Zn(2+) as a cofactor.

Its subcellular location is the cytoplasm. In terms of biological role, one of several proteins that assist in the late maturation steps of the functional core of the 30S ribosomal subunit. Helps release RbfA from mature subunits. May play a role in the assembly of ribosomal proteins into the subunit. Circularly permuted GTPase that catalyzes slow GTP hydrolysis, GTPase activity is stimulated by the 30S ribosomal subunit. This chain is Small ribosomal subunit biogenesis GTPase RsgA, found in Shigella boydii serotype 18 (strain CDC 3083-94 / BS512).